We begin with the raw amino-acid sequence, 101 residues long: Large ribosomal subunit protein uL24 (101 aa).

The protein belongs to the universal ribosomal protein uL24 family. As to quaternary structure, part of the 50S ribosomal subunit.

One of two assembly initiator proteins, it binds directly to the 5'-end of the 23S rRNA, where it nucleates assembly of the 50S subunit. In terms of biological role, one of the proteins that surrounds the polypeptide exit tunnel on the outside of the subunit. The protein is Large ribosomal subunit protein uL24 of Streptococcus thermophilus (strain CNRZ 1066).